Reading from the N-terminus, the 506-residue chain is D-alanine--D-alanyl carrier protein ligase (506 aa).

Position 152 to 153 (152 to 153 (TS)) interacts with ATP. Residue D197 participates in D-alanine binding. 292–297 (NTYGPT) provides a ligand contact to ATP. Residue V301 coordinates D-alanine. ATP-binding positions include D383, 395-398 (YRGR), and K494. K494 contributes to the D-alanine binding site.

Belongs to the ATP-dependent AMP-binding enzyme family. DltA subfamily.

The protein localises to the cytoplasm. It carries out the reaction holo-[D-alanyl-carrier protein] + D-alanine + ATP = D-alanyl-[D-alanyl-carrier protein] + AMP + diphosphate. It participates in cell wall biogenesis; lipoteichoic acid biosynthesis. Catalyzes the first step in the D-alanylation of lipoteichoic acid (LTA), the activation of D-alanine and its transfer onto the D-alanyl carrier protein (Dcp) DltC. In an ATP-dependent two-step reaction, forms a high energy D-alanyl-AMP intermediate, followed by transfer of the D-alanyl residue as a thiol ester to the phosphopantheinyl prosthetic group of the Dcp. D-alanylation of LTA plays an important role in modulating the properties of the cell wall in Gram-positive bacteria, influencing the net charge of the cell wall. This is D-alanine--D-alanyl carrier protein ligase from Lacticaseibacillus paracasei (strain ATCC 334 / BCRC 17002 / CCUG 31169 / CIP 107868 / KCTC 3260 / NRRL B-441) (Lactobacillus paracasei).